We begin with the raw amino-acid sequence, 133 residues long: Small ribosomal subunit protein uS8c (133 aa).

Belongs to the universal ribosomal protein uS8 family. As to quaternary structure, part of the 30S ribosomal subunit.

The protein localises to the plastid. Its subcellular location is the chloroplast. Functionally, one of the primary rRNA binding proteins, it binds directly to 16S rRNA central domain where it helps coordinate assembly of the platform of the 30S subunit. This is Small ribosomal subunit protein uS8c (rps8) from Mesostigma viride (Green alga).